A 549-amino-acid chain; its full sequence is mRNA-capping enzyme subunit beta (549 aa).

Ser2 is subject to N-acetylserine. Phosphoserine is present on Ser15. A disordered region spans residues 30–169 (LQKLSEAANG…QGNEGNIASN (140 aa)). Over residues 86-96 (DDEETDTDDEM) the composition is skewed to acidic residues. Ser124 is subject to Phosphoserine. The span at 135-157 (AKLEKPSDDSIHQNSKSDEEQRI) shows a compositional bias: basic and acidic residues. The N6-GMP-lysine intermediate role is filled by Lys223.

The protein belongs to the fungal TPase family. In terms of assembly, heterodimer. The mRNA-capping enzyme is composed of two separate chains alpha and beta, respectively a mRNA guanylyltransferase and an mRNA 5'-triphosphate monophosphatase. Requires Mg(2+) as cofactor.

It is found in the nucleus. It catalyses the reaction a 5'-end triphospho-ribonucleoside in mRNA + H2O = a 5'-end diphospho-ribonucleoside in mRNA + phosphate + H(+). First step of mRNA capping. Converts the 5'-triphosphate end of a nascent mRNA chain into a diphosphate end. In Saccharomyces cerevisiae (strain ATCC 204508 / S288c) (Baker's yeast), this protein is mRNA-capping enzyme subunit beta (CET1).